Consider the following 331-residue polypeptide: C-type lectin domain family 4 member K (331 aa).

Residues 1–41 (MPEAEMKEEAPEAHFTVDKQNISLWPREPPPKQDLSPVLRK) lie on the Cytoplasmic side of the membrane. A helical; Signal-anchor for type II membrane protein transmembrane segment spans residues 42–62 (PLCICVAFTCLALVLVTSIVL). Residues 63–331 (QAVFYPRLMG…CKRPYVQTTE (269 aa)) lie on the Extracellular side of the membrane. Residues Asn-90 and Asn-116 are each glycosylated (N-linked (GlcNAc...) asparagine). Positions 106 to 197 (DDAEVQMQIV…LKQQSDILEM (92 aa)) form a coiled coil. In terms of domain architecture, C-type lectin spans 205–323 (FSGNFYYFSR…CDNTFLFICK (119 aa)). 2 cysteine pairs are disulfide-bonded: Cys-226-Cys-322 and Cys-298-Cys-314.

In terms of assembly, homotrimer. Expressed by Langerhans cells. Expressed in dendritic cells and by scattered cells in lymph nodes and spleen. Also detected in some non-lymphoid tissues such as lung, liver and heart.

It is found in the membrane. Its function is as follows. Calcium-dependent lectin displaying mannose-binding specificity. Induces the formation of Birbeck granules (BGs); is a potent regulator of membrane superimposition and zippering. Binds to sulfated as well as mannosylated glycans, keratan sulfate (KS) and beta-glucans. Facilitates uptake of antigens and is involved in the routing and/or processing of antigen for presentation to T cells. In Mus musculus (Mouse), this protein is C-type lectin domain family 4 member K (Cd207).